The chain runs to 622 residues: MSQTSLEPLIISIIKLQILQLWLKLIAVGWNLGSNDDELYTELWKACAGPLVEVPRYGERVFYFPQGHMEQLVASTNQGVVDQEIPVFNLPPKILCRVLSVTLKAEHETDEVYAQITLQPEEDQSEPTSLDPPLVEPAKPTVDSFVKILTASDTSTHGGFSVLRKHATECLPSLDMTQPTPTQELVARDLHGYEWRFKHIFRGQPRRHLLTTGWSTFVTSKRLVAGDAFVFLRGETGDLRVGVRRLAKQQSTMPASVISSQSMRLGVLATASHAVTTTTIFVVFYKPRISQFIISVNKYMMAMKNGFSLGMRYRMRFEGEESPERIFTGTIIGSGDLSSQWPASKWRSLQIQWDEPSSIQRPNKVSPWEIEPFSPSALTPTPTQQQSKSKRSRPISEITGSPVASSFLSSFSQSHESNPSVKLLFQDPATERNSNKSVFSSGLQCKITEAPVTSSCRLFGFDLTSKPASATIPHDKQLISVDSNISDSTTKCQDPNSSNSPKEQKQQTSTRSRIKVQMQGTAVGRAVDLTLLRSYDELIKELEKMFEIEGELSPKDKWAIVFTDDEGDRMLVGDDPWNEFCKMAKKLFIYPSDEVKKMRSKSLLGDKGTIVNLESDQRTVHV.

A DNA-binding region (TF-B3) is located at residues 145–247; that stretch reads FVKILTASDT…DLRVGVRRLA (103 aa). 2 disordered regions span residues 358–398 and 483–513; these read SIQR…ISEI and SNISDSTTKCQDPNSSNSPKEQKQQTSTRSR. 2 stretches are compositionally biased toward polar residues: residues 376-387 and 483-511; these read SALTPTPTQQQS and SNISDSTTKCQDPNSSNSPKEQKQQTSTR. The PB1 domain maps to 511–594; it reads RSRIKVQMQG…KKLFIYPSDE (84 aa).

It belongs to the ARF family. Homodimers and heterodimers.

It is found in the nucleus. Functionally, auxin response factors (ARFs) are transcriptional factors that bind specifically to the DNA sequence 5'-TGTCTC-3' found in the auxin-responsive promoter elements (AuxREs). Could act as transcriptional activator or repressor. Formation of heterodimers with Aux/IAA proteins may alter their ability to modulate early auxin response genes expression. The protein is Auxin response factor 11 (ARF11) of Arabidopsis thaliana (Mouse-ear cress).